Reading from the N-terminus, the 115-residue chain is Promotilin (115 aa).

A signal peptide spans 1–25 (MVSRKAVAALLVVHAPAMLASQTEA). The disordered stretch occupies residues 40 to 74 (EKERSKGQKKSLSVWQRSGEEGPVDPAEPIEEEGN).

Belongs to the motilin family.

It is found in the secreted. Plays an important role in the regulation of interdigestive gastrointestinal motility and indirectly causes rhythmic contraction of duodenal and colonic smooth muscle. The sequence is that of Promotilin (MLN) from Macaca mulatta (Rhesus macaque).